We begin with the raw amino-acid sequence, 1715 residues long: Rho guanine nucleotide exchange factor TIAM2 (1715 aa).

Composition is skewed to polar residues over residues 1 to 22 and 218 to 229; these read MGNSESQYTFQGSKNHSNTVTG and GSPSSQRPSPTD. Disordered regions lie at residues 1–27, 174–249, 263–294, and 385–418; these read MGNSESQYTFQGSKNHSNTVTGAKQKP, FHNG…WYDS, SFLAPSTPDPSLPSSFPPSDTKKPFNQSSSLS, and TGSLSRKKRKLQEPRSMEGSEYFDSHSDGLNAEG. G2 carries N-myristoyl glycine lipidation. Residues 235–245 are compositionally biased toward low complexity; the sequence is SKGSSLSSESS. Positions 395 to 411 are enriched in basic and acidic residues; it reads LQEPRSMEGSEYFDSHS. The PH 1 domain occupies 504–618; the sequence is VVRKAGWLFF…WVTAIHSACA (115 aa). Residues 665-692 are a coiled coil; that stretch reads PKNRKAIENQIRQWEQNLEKFHMDLFRM. An RBD domain is found at 831-902; the sequence is VQTYVHFQDN…YMQEQVYDEI (72 aa). In terms of domain architecture, PDZ spans 911 to 997; the sequence is DVQLTKTGDM…GLTLVARPVT (87 aa). The disordered stretch occupies residues 1092–1113; sequence THTNSMEAPTESHDPPPRPLAR. Positions 1120 to 1314 constitute a DH domain; the sequence is RLRKVIQELV…EKVASHINEM (195 aa). In terms of domain architecture, PH 2 spans 1347–1478; the sequence is LLMHSTVSWL…KVIRSILREN (132 aa). The interval 1515 to 1582 is disordered; that stretch reads SLKGLRTSSS…EGLAEFPDGL (68 aa). The span at 1522 to 1532 shows a compositional bias: low complexity; sequence SSSSEWPSEPS. Residues 1533–1552 show a composition bias toward polar residues; sequence KGNSLDSDECSLSSGTQSSG. Residues 1557-1572 show a composition bias toward basic and acidic residues; sequence ESRRDSKSTELEKDAQ. Phosphoserine is present on S1604. A Phosphothreonine modification is found at T1662.

Belongs to the TIAM family. In terms of assembly, interacts with MAP1A, MAP1B, PARP1 and YWHAE. Interacts with CD44, PARD3 and MAPK8IP2. In terms of processing, phosphorylated on serine and threonine residues. Phosphorylated on Thr-1662 by Rho-kinase. Its phosphorylation by Rho-kinase inhibits its guanine nucleotide exchange activity, its interaction with MAP1A, MAP1B, PARP1 and YWHAE and reduces its ability to promote neurite growth. Expressed in fetal brain (at protein level). Expressed in the olfactory bulb, cortical plate of the cerebral cortex, caudate putamen, hippocampus, ependymal cells of the lateral surface of the lateral ventricles of the brain. Weakly expressed in heart, lung, liver, skeletal muscle, kidney and testis.

It is found in the cytoplasm. The protein localises to the cell projection. It localises to the lamellipodium. The protein resides in the filopodium. Its subcellular location is the growth cone. It is found in the neuron projection. The protein localises to the perikaryon. Its function is as follows. Modulates the activity of RHO-like proteins and connects extracellular signals to cytoskeletal activities. Acts as a GDP-dissociation stimulator protein that stimulates the GDP-GTP exchange activity of RHO-like GTPases and activates them. Activates specifically RAC1, but not CDC42 and RHOA. Mediates extracellular laminin signals to activate Rac1, contributing to neurite growth. Involved in lamellipodial formation and advancement of the growth cone of embryonic hippocampal neurons. Promotes migration of neurons in the cerebral cortex. When overexpressed, induces membrane ruffling accompanied by the accumulation of actin filaments along the altered plasma membrane. In Mus musculus (Mouse), this protein is Rho guanine nucleotide exchange factor TIAM2.